The sequence spans 208 residues: MLNVDKLIIGFDNALRTLLAPAATLRPIPGKDLPENELSKIEKRESAALMRINHVGEVCAQALYQGQALTARNEQVRQALDQAAREETEHLAWTERRIAELGGHKSFLNPLWYGGSFALGLVAGVLGDKWNLGFLAETERQVEAHLADHLQRLPHQDVRSRAIVSQMKVDEACHATMAVSYGGGPLPVPIKAVMKFSSGIMTRTAYWV.

Fe cation-binding residues include glutamate 57, glutamate 87, histidine 90, glutamate 139, glutamate 171, and histidine 174.

It belongs to the COQ7 family. The cofactor is Fe cation.

The protein localises to the cell membrane. It catalyses the reaction a 5-methoxy-2-methyl-3-(all-trans-polyprenyl)benzene-1,4-diol + AH2 + O2 = a 3-demethylubiquinol + A + H2O. It participates in cofactor biosynthesis; ubiquinone biosynthesis. Its function is as follows. Catalyzes the hydroxylation of 2-nonaprenyl-3-methyl-6-methoxy-1,4-benzoquinol during ubiquinone biosynthesis. The polypeptide is 3-demethoxyubiquinol 3-hydroxylase (Nitrosomonas eutropha (strain DSM 101675 / C91 / Nm57)).